Reading from the N-terminus, the 272-residue chain is Probable proteasome subunit alpha type-6 (272 aa).

Over residues 243–261 (AARASRAAAEEPQAPTAEA) the composition is skewed to low complexity. The interval 243-272 (AARASRAAAEEPQAPTAEAILDSADAMETD) is disordered.

Belongs to the peptidase T1A family. The 26S proteasome consists of a 20S proteasome core and two 19S regulatory subunits. The 20S proteasome core is composed of 28 subunits that are arranged in four stacked rings, resulting in a barrel-shaped structure. The two end rings are each formed by seven alpha subunits, and the two central rings are each formed by seven beta subunits. The catalytic chamber with the active sites is on the inside of the barrel.

The protein localises to the cytoplasm. Its subcellular location is the nucleus. Its function is as follows. The proteasome is a multicatalytic proteinase complex which is characterized by its ability to cleave peptides with Arg, Phe, Tyr, Leu, and Glu adjacent to the leaving group at neutral or slightly basic pH. The proteasome has an ATP-dependent proteolytic activity. This Schizosaccharomyces pombe (strain 972 / ATCC 24843) (Fission yeast) protein is Probable proteasome subunit alpha type-6.